The chain runs to 1032 residues: Calmodulin-binding transcription activator 3 (1032 aa).

The CG-1 DNA-binding region spans V15–S141. The interval R146–H197 is disordered. Over residues C174–G195 the composition is skewed to polar residues. The residue at position 272 (S272) is a Phosphoserine. ANK repeat units lie at residues G661 to F690, N694 to T723, and S733 to V762. IQ domains are found at residues V852–K881 and T875–V904. Positions W900–F922 are calmodulin-binding. Positions K945–E987 form a coiled coil. A Phosphoserine modification is found at S964.

The protein belongs to the CAMTA family. As to quaternary structure, interacts with SR1IP1. Interacts with DSC1. Ubiquinated during pathogen infection. Ubiquitination leads to its subsequent proteasome-dependent degradation, thus allowing the establishment of plant defense response. Expressed in roots, stems, leaves, carpels, and siliques, but not in stigmas or other parts of the flower.

The protein resides in the nucleus. In terms of biological role, transcription activator that binds to the DNA consensus sequence 5'-[ACG]CGCG[GTC]-3'. Binds calmodulin in a calcium-dependent manner in vitro. Regulates transcriptional activity in response to calcium signals. Involved in freezing tolerance in association with CAMTA1 and CAMTA2. Required for the cold-induced expression of DREB1B/CBF1, DREB1C/CBF2, ZAT12 and GOLS3. Involved in response to cold. Contributes together with CAMTA5 to the positive regulation of the cold-induced expression of DREB1A/CBF3, DREB1B/CBF1 and DREB1C/CBF2. Involved together with CAMTA2 and CAMTA4 in the positive regulation of a general stress response (GSR). Involved in the regulation of GSR amplitude downstream of MEKK1. Involved in the regulation of a set of genes involved in defense responses against pathogens. Involved in the regulation of both basal resistance and systemic acquired resistance (SAR). Acts as negative regulator of plant immunity. Binds to the promoter of the defense-related gene EDS1 and represses its expression. Binds to the promoter of the defense-related gene NDR1 and represses its expression. Involved in defense against insects. Required for tolerance to the generalist herbivore Trichoplusia ni, and contributes to the positive regulation of genes associated with glucosinolate metabolism. Required for tolerance to Bradysia impatiens larvae. Mediates herbivore-induced wound response. Required for wound-induced jasmonate accumulation. Involved in the regulation of ethylene-induced senescence by binding to the promoter of the senescence-inducer gene EIN3 and repressing its expression. In Arabidopsis thaliana (Mouse-ear cress), this protein is Calmodulin-binding transcription activator 3.